A 99-amino-acid chain; its full sequence is UPF0729 protein CG18508 (99 aa).

The disordered stretch occupies residues 60–99 (PGGKKTENVSDDDAEESENPPLNATAMAAETEVDESKKEI). Residues 68–77 (VSDDDAEESE) are compositionally biased toward acidic residues. Phosphoserine is present on S69.

It belongs to the UPF0729 family.

The chain is UPF0729 protein CG18508 from Drosophila melanogaster (Fruit fly).